Reading from the N-terminus, the 85-residue chain is Large ribosomal subunit protein bL31B (85 aa).

This sequence belongs to the bacterial ribosomal protein bL31 family. Type B subfamily. Part of the 50S ribosomal subunit.

This Staphylococcus epidermidis (strain ATCC 35984 / DSM 28319 / BCRC 17069 / CCUG 31568 / BM 3577 / RP62A) protein is Large ribosomal subunit protein bL31B.